The chain runs to 1077 residues: Receptor-type guanylate cyclase daf-11 (1077 aa).

Asn-14, Asn-112, Asn-149, and Asn-311 each carry an N-linked (GlcNAc...) asparagine glycan. The chain crosses the membrane as a helical span at residues 335–355 (TGVIIAIAVIMGVLLMFIIIL). Residues 355–695 (LTTIRKCCNG…LARKIIDTVL (341 aa)) form the Protein kinase domain. Over 356-1077 (TTIRKCCNGS…DSQASTIPDN (722 aa)) the chain is Cytoplasmic. The Guanylate cyclase domain occupies 765-895 (TILYSDIVGF…EAVILASKME (131 aa)). Mg(2+) is bound by residues Asp-770, Ile-771, and Asp-814. Residues 983 to 1034 (KDKMTLAKEKVIAERKNEEERLQRQQTLQEALEEHEEEIEMNEVLVDEDEGE) adopt a coiled-coil conformation. Positions 1048 to 1077 (TQMEELEDEPAGRTIGHGRLDSQASTIPDN) are disordered.

This sequence belongs to the adenylyl cyclase class-4/guanylyl cyclase family. Expressed in sensory neurons including ASI, ASJ, ASK, AWB and AWC. Expressed in ASJ neurons in the dauer stage.

It is found in the cell membrane. The protein localises to the cell projection. Its subcellular location is the dendrite. The protein resides in the cilium. It localises to the perikaryon. The enzyme catalyses GTP = 3',5'-cyclic GMP + diphosphate. In terms of biological role, guanylate cyclase involved in the production of the second messenger cGMP. In addition, regulates cGMP levels by controlling the transcription of 3',5'-cyclic phosphodiesterase pde-1 and pde-5 mRNAs. Involved in the olfactory, light and pheromone sensing pathways. Part of the chemosensory mechanism of the ASJ sensory neuron that controls dauer formation and dauer recovery. Promotes the calcium flux in ASJ sensory neurons in response to onset and removal of a nitric oxide (NO) stimulus and is thereby required for the behavioral avoidance response to NO-producing organisms like P.aeruginosa. In ASI and ASJ sensory neurons, controls dauer formation and behavioral response to P.aeruginosa by up-regulating the transcription of daf-7, a member of the TGF-beta family. Required for the chemotaxis responses to non-volatile and volatile attractants mediated by the sensory neurons ASE and AWC respectively. Required in ASJ neurons for phototransduction downstream of G protein coupled-photoreceptor lite-1. Plays a role in the development of ASJ sensory neuron axons during late larval stages and in the maintenance of normal axon morphology in adults. Required to maintain the expression of putative olfactory receptor str-2 in one of the two AWC neurons in adults. Regulates, via the production of cGMP, lifespan (in some environmental conditions), sensitivity to oxidative stress and entry into quiescence triggered by satiety. In AWB and AWC sensory neurons, mediates the recognition of food odors which subsequently allows for the detection of preferred food sources. The polypeptide is Receptor-type guanylate cyclase daf-11 (Caenorhabditis elegans).